We begin with the raw amino-acid sequence, 1066 residues long: Thyrotropin-releasing hormone-degrading ectoenzyme (1066 aa).

A compositionally biased stretch (basic and acidic residues) spans 1 to 14; it reads MALDGERGEQEEEK. The tract at residues 1–43 is disordered; sequence MALDGERGEQEEEKKKKKKKKKRKKKEEEGAEKSSSPFAATMG. At 1–81 the chain is on the cytoplasmic side; that stretch reads MALDGERGEQ…ERHIAVHKRL (81 aa). The segment covering 15-25 has biased composition (basic residues); that stretch reads KKKKKKKKRKK. At threonine 71 the chain carries Phosphothreonine; by PKC. The helical; Signal-anchor for type II membrane protein transmembrane segment at 82–102 threads the bilayer; it reads VLAFAVSIVALLAVTMLAVLL. The Extracellular portion of the chain corresponds to 103–1066; the sequence is SLRFDECGAS…FQWLGKAMRH (964 aa). Residues 117 to 177 are disordered; sequence GTDGGLGGFP…SEEEQEQWQP (61 aa). Residues 118–127 are compositionally biased toward gly residues; that stretch reads TDGGLGGFPE. The N-linked (GlcNAc...) asparagine glycan is linked to asparagine 131. Positions 143 to 154 are enriched in basic and acidic residues; sequence HAGEESSQREIG. N-linked (GlcNAc...) asparagine glycans are attached at residues asparagine 202, asparagine 217, asparagine 264, and asparagine 380. Position 446 to 450 (446 to 450) interacts with substrate; it reads AAMEN. Histidine 482 lines the Zn(2+) pocket. Glutamate 483 functions as the Proton acceptor in the catalytic mechanism. Zn(2+) is bound by residues histidine 486 and glutamate 505. 7 N-linked (GlcNAc...) asparagine glycosylation sites follow: asparagine 647, asparagine 676, asparagine 691, asparagine 705, asparagine 726, asparagine 842, and asparagine 948.

The protein belongs to the peptidase M1 family. Homodimer; disulfide-linked. Zn(2+) is required as a cofactor. As to expression, predominantly expressed in brain and pituitary. Lower levels in lung and liver.

The protein resides in the membrane. The catalysed reaction is Release of the N-terminal pyroglutamyl group from pGlu-|-His-Xaa tripeptides and pGlu-|-His-Xaa-Gly tetrapeptides.. Functionally, specific inactivation of TRH after its release. The chain is Thyrotropin-releasing hormone-degrading ectoenzyme (Trhde) from Rattus norvegicus (Rat).